The chain runs to 376 residues: Salivary hyaluronidase (376 aa).

A signal peptide spans 1–16; that stretch reads MNWIFHLFCAVYGIFC. Cystine bridges form between cysteine 32/cysteine 328 and cysteine 203/cysteine 217. Asparagine 36, asparagine 55, asparagine 77, and asparagine 88 each carry an N-linked (GlcNAc...) asparagine glycan. Glutamate 118 serves as the catalytic Proton donor. Asparagine 143, asparagine 153, asparagine 181, asparagine 214, asparagine 226, asparagine 248, asparagine 287, asparagine 321, asparagine 336, asparagine 356, and asparagine 371 each carry an N-linked (GlcNAc...) asparagine glycan.

The protein belongs to the glycosyl hydrolase 56 family. Post-translationally, glycosylated; glycosylation is critical for enzymatic activity. Female salivary gland (at protein level).

It localises to the secreted. The enzyme catalyses Random hydrolysis of (1-&gt;4)-linkages between N-acetyl-beta-D-glucosamine and D-glucuronate residues in hyaluronate.. Hydrolyzes high molecular weight hyaluronic acid to produce small oligosaccharides. Up-regulates expression of CSF2, CSF3, LIF, CXCL1, CXCL2 and CXCL8 in cultured human dermal microvascular endothelial cells. Promotes host neutrophil recruitment at the injection site. Functionally, (Microbial infection) Probably promotes Leishmania major infection in the host. This chain is Salivary hyaluronidase, found in Lutzomyia longipalpis (Sand fly).